Consider the following 185-residue polypeptide: RING-H2 finger protein ATL8 (185 aa).

Residues 28-48 (LVLILAVLLCALTCIIGLIAV) traverse the membrane as a helical segment. The segment at 104–146 (CAICLTEFAAGDELRVLPQCGHGFHVSCIDTWLGSHSSCPSCR) adopts an RING-type; atypical zinc-finger fold. The disordered stretch occupies residues 161–185 (PGSSSSGPEPDTRIKQREDGPDNLP). A compositionally biased stretch (basic and acidic residues) spans 170-185 (PDTRIKQREDGPDNLP).

This sequence belongs to the RING-type zinc finger family. ATL subfamily.

It localises to the membrane. The catalysed reaction is S-ubiquitinyl-[E2 ubiquitin-conjugating enzyme]-L-cysteine + [acceptor protein]-L-lysine = [E2 ubiquitin-conjugating enzyme]-L-cysteine + N(6)-ubiquitinyl-[acceptor protein]-L-lysine.. It participates in protein modification; protein ubiquitination. The sequence is that of RING-H2 finger protein ATL8 (ATL8) from Arabidopsis thaliana (Mouse-ear cress).